The following is a 206-amino-acid chain: Large ribosomal subunit protein bL25 (206 aa).

It belongs to the bacterial ribosomal protein bL25 family. CTC subfamily. In terms of assembly, part of the 50S ribosomal subunit; part of the 5S rRNA/L5/L18/L25 subcomplex. Contacts the 5S rRNA. Binds to the 5S rRNA independently of L5 and L18.

This is one of the proteins that binds to the 5S RNA in the ribosome where it forms part of the central protuberance. The chain is Large ribosomal subunit protein bL25 from Paraburkholderia phytofirmans (strain DSM 17436 / LMG 22146 / PsJN) (Burkholderia phytofirmans).